A 180-amino-acid chain; its full sequence is Large ribosomal subunit protein uL6 (180 aa).

The protein belongs to the universal ribosomal protein uL6 family. Part of the 50S ribosomal subunit.

Its function is as follows. This protein binds to the 23S rRNA, and is important in its secondary structure. It is located near the subunit interface in the base of the L7/L12 stalk, and near the tRNA binding site of the peptidyltransferase center. The chain is Large ribosomal subunit protein uL6 from Anaeromyxobacter dehalogenans (strain 2CP-C).